The sequence spans 423 residues: MKLLVIGNGGREHALAWKLAQSPKVETVFVAPGNAGTAIEPKLQNIDLTAHQDLIEFCRKENIVFTVVGPEAPLAAGVVDDFRAAGLKIFGPTQYAAQLESSKDFAKAFMAKYNIPTAQYQTFENADAAHDYVNQKGAPIVIKADGLAAGKGVIVAMTLDEAHAAIDDMLLDNKMGNAGARVVIEDFLQGEEASFIVMVDGNNVLPMATSQDHKRLLDGDKGLNTGGMGAYSPAPVVTPVVYERAMNEIILPTVAGMKAEGHEFTGFLYAGLMIDQSGAPHTIEFNCRFGDPETQPIMSRLNSDLSDLVEAAIDGKLDSVTAEWSPQTAVGVVLAAQNYPETPKKGDVISGLDAANQVGKVFHAGTTANEKGDVLTNGGRVLCVVGLGDNVAQAKAKAYGALEKISFDGMQYRKDIADKAINR.

Positions 107 to 314 constitute an ATP-grasp domain; sequence KAFMAKYNIP…LSDLVEAAID (208 aa). Residue 133 to 194 participates in ATP binding; that stretch reads VNQKGAPIVI…EDFLQGEEAS (62 aa). Residues E284 and N286 each contribute to the Mg(2+) site.

The protein belongs to the GARS family. Mg(2+) is required as a cofactor. It depends on Mn(2+) as a cofactor.

The catalysed reaction is 5-phospho-beta-D-ribosylamine + glycine + ATP = N(1)-(5-phospho-beta-D-ribosyl)glycinamide + ADP + phosphate + H(+). Its pathway is purine metabolism; IMP biosynthesis via de novo pathway; N(1)-(5-phospho-D-ribosyl)glycinamide from 5-phospho-alpha-D-ribose 1-diphosphate: step 2/2. In Neisseria meningitidis serogroup A / serotype 4A (strain DSM 15465 / Z2491), this protein is Phosphoribosylamine--glycine ligase.